The following is a 130-amino-acid chain: Small ribosomal subunit protein uS8 (130 aa).

The protein belongs to the universal ribosomal protein uS8 family. As to quaternary structure, part of the 30S ribosomal subunit.

In terms of biological role, one of the primary rRNA binding proteins, it binds directly to 16S rRNA central domain where it helps coordinate assembly of the platform of the 30S subunit. The sequence is that of Small ribosomal subunit protein uS8 from Cenarchaeum symbiosum (strain A).